The following is a 131-amino-acid chain: Bacteriohemerythrin (131 aa).

8 residues coordinate Fe cation: histidine 20, glutamate 23, histidine 56, glutamate 60, histidine 75, histidine 79, histidine 117, and aspartate 122.

This sequence belongs to the hemerythrin family. As to quaternary structure, monomer.

In terms of biological role, oxygen-binding protein. May be involved in a storage mechanism or for delivery to oxygen-requiring enzymes. The oxygen-binding site contains two iron atoms. This Aquifex aeolicus (strain VF5) protein is Bacteriohemerythrin.